A 486-amino-acid chain; its full sequence is 2-succinylbenzoate--CoA ligase (486 aa).

The protein belongs to the ATP-dependent AMP-binding enzyme family. MenE subfamily.

It catalyses the reaction 2-succinylbenzoate + ATP + CoA = 2-succinylbenzoyl-CoA + AMP + diphosphate. Its pathway is quinol/quinone metabolism; 1,4-dihydroxy-2-naphthoate biosynthesis; 1,4-dihydroxy-2-naphthoate from chorismate: step 5/7. It functions in the pathway quinol/quinone metabolism; menaquinone biosynthesis. In terms of biological role, converts 2-succinylbenzoate (OSB) to 2-succinylbenzoyl-CoA (OSB-CoA). The polypeptide is 2-succinylbenzoate--CoA ligase (Bacillus pumilus (strain SAFR-032)).